A 361-amino-acid polypeptide reads, in one-letter code: Probable dual-specificity RNA methyltransferase RlmN (361 aa).

Glutamate 102 acts as the Proton acceptor in catalysis. The region spanning 108–344 (SGDRLTVCVS…VRWSKGLGAD (237 aa)) is the Radical SAM core domain. The cysteines at positions 115 and 347 are disulfide-linked. Residues cysteine 122, cysteine 126, and cysteine 129 each contribute to the [4Fe-4S] cluster site. S-adenosyl-L-methionine is bound by residues 169–170 (GE), serine 199, 228–230 (SLH), and asparagine 304. Cysteine 347 serves as the catalytic S-methylcysteine intermediate.

This sequence belongs to the radical SAM superfamily. RlmN family. It depends on [4Fe-4S] cluster as a cofactor.

The protein localises to the cytoplasm. The enzyme catalyses adenosine(2503) in 23S rRNA + 2 reduced [2Fe-2S]-[ferredoxin] + 2 S-adenosyl-L-methionine = 2-methyladenosine(2503) in 23S rRNA + 5'-deoxyadenosine + L-methionine + 2 oxidized [2Fe-2S]-[ferredoxin] + S-adenosyl-L-homocysteine. The catalysed reaction is adenosine(37) in tRNA + 2 reduced [2Fe-2S]-[ferredoxin] + 2 S-adenosyl-L-methionine = 2-methyladenosine(37) in tRNA + 5'-deoxyadenosine + L-methionine + 2 oxidized [2Fe-2S]-[ferredoxin] + S-adenosyl-L-homocysteine. In terms of biological role, specifically methylates position 2 of adenine 2503 in 23S rRNA and position 2 of adenine 37 in tRNAs. This chain is Probable dual-specificity RNA methyltransferase RlmN, found in Synechococcus elongatus (strain ATCC 33912 / PCC 7942 / FACHB-805) (Anacystis nidulans R2).